Consider the following 156-residue polypeptide: Small ribosomal subunit protein uS7 (156 aa).

This sequence belongs to the universal ribosomal protein uS7 family. Part of the 30S ribosomal subunit. Contacts proteins S9 and S11.

In terms of biological role, one of the primary rRNA binding proteins, it binds directly to 16S rRNA where it nucleates assembly of the head domain of the 30S subunit. Is located at the subunit interface close to the decoding center, probably blocks exit of the E-site tRNA. In Synechococcus elongatus (strain ATCC 33912 / PCC 7942 / FACHB-805) (Anacystis nidulans R2), this protein is Small ribosomal subunit protein uS7.